The sequence spans 40 residues: Large ribosomal subunit protein bL36 (40 aa).

Belongs to the bacterial ribosomal protein bL36 family.

The polypeptide is Large ribosomal subunit protein bL36 (Corynebacterium kroppenstedtii (strain DSM 44385 / JCM 11950 / CIP 105744 / CCUG 35717)).